We begin with the raw amino-acid sequence, 399 residues long: Glutathione-independent formaldehyde dehydrogenase (399 aa).

C47 contacts Zn(2+). NAD(+) is bound by residues G48, S49, and H52. Zn(2+) is bound by residues H68, C98, C101, C104, C112, and D170. The NAD(+) site is built by V198, D218, R223, V263, R268, P300, Q338, and T339.

Belongs to the zinc-containing alcohol dehydrogenase family. In terms of assembly, homotetramer. The cofactor is Zn(2+).

It carries out the reaction formaldehyde + NAD(+) + H2O = formate + NADH + 2 H(+). The enzyme catalyses acetaldehyde + NAD(+) + H2O = acetate + NADH + 2 H(+). Functionally, dehydrogenase that catalyzes the NAD(+)-dependent oxidation of formaldehyde and acetaldehyde. Shows no detectable activity against either aldehydes with longer carbon chains or ethanol. This Pseudomonas aeruginosa (strain LESB58) protein is Glutathione-independent formaldehyde dehydrogenase.